A 515-amino-acid chain; its full sequence is MSSVAITPGCVPLSGWRAILAGAAIRLDESCRPAIARAAEAVAAIVTRAEPVYGINTGFGKLATVRIDAADLATLQRNIVLSHAAGTGEPMPVAVARLMMALKLASLGQGASGVRPETVALLEAMLARGVTPLVPAQGSVGASGDLAPLAHMTAAMIGVGACIDEAGTRIPAAEALSRVGLEPLTLGPKEGLALLNGTQFSTAYALAGLFGAEDLLRAALVAGALSVDAARGSDTPFDPRIHALRRHRGQIETARALRDLLSGSAIRASHLVGDERVQDPYCLRCQPQVMGAALDLLRQAAATLETEANGVSDNPLVFPETGEALSGGNFHAEPVAFAADMIALALCEIGALSERRIALLVDPALSSGLPAFLTPRPGLNSGFMIPQVTAAALVSENKQRAHPASVDSIPTSANQEDHVSMAAHGARRLLPMVENAMAVIAIELLAAAQGCDFLAPLRSSEPLERVRARLRAAVPRLDEDRYFHPDLAAAAALVRGGAVVEAAGVGLPGVSGGVA.

The segment at residues 142 to 144 is a cross-link (5-imidazolinone (Ala-Gly)); that stretch reads ASG. Ser-143 carries the post-translational modification 2,3-didehydroalanine (Ser).

The protein belongs to the PAL/histidase family. Post-translationally, contains an active site 4-methylidene-imidazol-5-one (MIO), which is formed autocatalytically by cyclization and dehydration of residues Ala-Ser-Gly.

It is found in the cytoplasm. It carries out the reaction L-histidine = trans-urocanate + NH4(+). Its pathway is amino-acid degradation; L-histidine degradation into L-glutamate; N-formimidoyl-L-glutamate from L-histidine: step 1/3. This chain is Histidine ammonia-lyase, found in Methylobacterium nodulans (strain LMG 21967 / CNCM I-2342 / ORS 2060).